The primary structure comprises 37 residues: Calcitonin gene-related peptide 1 (37 aa).

An intrachain disulfide couples cysteine 2 to cysteine 7. Residue phenylalanine 37 is modified to Phenylalanine amide.

This sequence belongs to the calcitonin family.

The protein resides in the secreted. Its function is as follows. CGRP1/CALCA is a peptide hormone that induces vasodilation mediated by the CALCRL-RAMP1 receptor complex. Dilates a variety of vessels including the coronary, cerebral and systemic vasculature. Its abundance in the CNS also points toward a neurotransmitter or neuromodulator role. It also elevates platelet cAMP. CGRP1 can also bind and activate CALCR-RAMP1 (AMYR1) receptor complex. This Ovis aries (Sheep) protein is Calcitonin gene-related peptide 1 (CALCA).